We begin with the raw amino-acid sequence, 492 residues long: Homoserine O-acetyltransferase (492 aa).

One can recognise an AB hydrolase-1 domain in the interval 47–354 (NVILVCHALT…NYGHDAFLLE (308 aa)). Ser-152 acts as the Nucleophile in catalysis. Arg-221 lines the substrate pocket. Catalysis depends on residues Asp-315 and His-348. Asp-349 is a substrate binding site. 2 consecutive CBS domains span residues 375–432 (MKLD…FTTL) and 436–492 (LTKN…HRCT).

Belongs to the AB hydrolase superfamily. MetX family. Homodimer.

The protein localises to the cytoplasm. It carries out the reaction L-homoserine + acetyl-CoA = O-acetyl-L-homoserine + CoA. It functions in the pathway amino-acid biosynthesis; L-methionine biosynthesis via de novo pathway; O-acetyl-L-homoserine from L-homoserine: step 1/1. Transfers an acetyl group from acetyl-CoA to L-homoserine, forming acetyl-L-homoserine. In Methanosalsum zhilinae (strain DSM 4017 / NBRC 107636 / OCM 62 / WeN5) (Methanohalophilus zhilinae), this protein is Homoserine O-acetyltransferase.